A 302-amino-acid chain; its full sequence is 1D-myo-inositol 2-acetamido-2-deoxy-alpha-D-glucopyranoside deacetylase (302 aa).

Positions 13, 16, and 155 each coordinate Zn(2+).

This sequence belongs to the MshB deacetylase family. The cofactor is Zn(2+).

It catalyses the reaction 1D-myo-inositol 2-acetamido-2-deoxy-alpha-D-glucopyranoside + H2O = 1D-myo-inositol 2-amino-2-deoxy-alpha-D-glucopyranoside + acetate. Catalyzes the deacetylation of 1D-myo-inositol 2-acetamido-2-deoxy-alpha-D-glucopyranoside (GlcNAc-Ins) in the mycothiol biosynthesis pathway. This is 1D-myo-inositol 2-acetamido-2-deoxy-alpha-D-glucopyranoside deacetylase from Nocardioides sp. (strain ATCC BAA-499 / JS614).